We begin with the raw amino-acid sequence, 1473 residues long: Collagen alpha-1(XVII) chain (1473 aa).

The segment covering 1 to 19 (MDITQKNKRDGTEVTERII) has biased composition (basic and acidic residues). Disordered stretches follow at residues 1 to 155 (MDIT…PSTR) and 168 to 188 (GSRS…PIPK). Residues 1–474 (MDITQKNKRD…CGSWCSWWKW (474 aa)) lie on the Cytoplasmic side of the membrane. Residues 1 to 572 (MDITQKNKRD…MTEQENGNLR (572 aa)) form a nonhelical region (NC16) region. Composition is skewed to polar residues over residues 57-96 (LTHG…SPGS), 111-120 (EGSSSGNSSP), and 170-184 (RSAS…SNTL). The interval 146–231 (RLQSASPSTR…WSSTLPAGSS (86 aa)) is necessary for interaction with DST and for the recruitment of DST to hemidesmosome. The helical; Signal-anchor for type II membrane protein transmembrane segment at 475–495 (LLGLLLTWLLLLGLLFGLIAL) threads the bilayer. Residues 496–1473 (AEEVRKLKAR…RRRRSIAVKP (978 aa)) are Extracellular-facing. Disordered stretches follow at residues 567–1017 (ENGN…LSSS), 1173–1234 (FRGI…ISGA), and 1261–1308 (SFIV…SSMG). Residues 573–1459 (GSPGPKGDMG…KGEKGDKGDQ (887 aa)) are triple-helical region. 4 stretches are compositionally biased toward low complexity: residues 619–638 (EPGM…MGPR), 667–678 (PGSVGPKGSIGP), 729–742 (EPGA…AGPD), and 769–790 (PGKP…PGRP). Positions 814–835 (PGPPGPPGAMGPPGPPGAPGPV) are enriched in pro residues. Composition is skewed to low complexity over residues 837–847 (PAGLPGQQGPR) and 854–866 (GESF…SFSE). Composition is skewed to pro residues over residues 878 to 899 (PPGP…PGPP) and 913 to 922 (PPGPPGPPGP). Low complexity predominate over residues 940-957 (FPGLSGSGSSSLGLNLQG). 2 stretches are compositionally biased toward pro residues: residues 1001–1011 (PPGPPGPPGPP) and 1179–1188 (PPGPPGPPGL). A compositionally biased stretch (polar residues) spans 1198 to 1210 (TEDLSSYLQTAGL). 2 stretches are compositionally biased toward pro residues: residues 1214 to 1228 (PGPP…PRGP) and 1266 to 1275 (PPGPPGPQGP). The segment covering 1283 to 1307 (STDSSYSRSGSSSSFSRDTSYSSSM) has biased composition (low complexity). Residue Asn-1404 is glycosylated (N-linked (GlcNAc...) asparagine). The tract at residues 1417–1473 (GAIPGPPGQKGEMGIPGPKGERGPAGPPGPRGHKGEKGDKGDQFYIGRRRRSIAVKP) is disordered. Over residues 1449-1458 (HKGEKGDKGD) the composition is skewed to basic and acidic residues. Positions 1460–1473 (FYIGRRRRSIAVKP) are nonhelical region (NC1). Over residues 1463 to 1473 (GRRRRSIAVKP) the composition is skewed to basic residues.

As to quaternary structure, homotrimers of alpha 1(XVII)chains. Interacts (via cytoplasmic region) with ITGB4 (via cytoplasmic region). Interacts (via cytoplasmic region) with DST (via N-terminus). Interacts (via N-terminus) with PLEC. Interacts (via cytoplasmic region) with DSP. In terms of processing, the intracellular/endo domain is disulfide-linked. Post-translationally, prolines at the third position of the tripeptide repeating unit (G-X-Y) are hydroxylated in some or all of the chains. The ectodomain is shedded from the surface of keratinocytes resulting in a 120-kDa soluble form, also named as 120 kDa linear IgA disease antigen homolog. The shedding is mediated by membrane-bound metalloproteases.

It is found in the cell junction. The protein localises to the hemidesmosome. Its subcellular location is the membrane. It localises to the secreted. The protein resides in the extracellular space. It is found in the extracellular matrix. The protein localises to the basement membrane. Functionally, may play a role in the integrity of hemidesmosome and the attachment of basal keratinocytes to the underlying basement membrane. In terms of biological role, the 120 kDa linear IgA disease antigen homolog is an anchoring filament component involved in dermal-epidermal cohesion. This Bos taurus (Bovine) protein is Collagen alpha-1(XVII) chain (COL17A1).